A 108-amino-acid chain; its full sequence is FK506-binding protein 1 (108 aa).

Residues 20-108 (GDNVTIHYVG…KFEVELLKVN (89 aa)) form the PPIase FKBP-type domain.

Belongs to the FKBP-type PPIase family. FKBP1 subfamily.

Its subcellular location is the cytoplasm. The catalysed reaction is [protein]-peptidylproline (omega=180) = [protein]-peptidylproline (omega=0). Inhibited by both FK506 and rapamycin. In terms of biological role, PPIases accelerate the folding of proteins. It catalyzes the cis-trans isomerization of proline imidic peptide bonds in oligopeptides. The sequence is that of FK506-binding protein 1 (FRR1) from Cryptococcus neoformans var. grubii serotype A (strain H99 / ATCC 208821 / CBS 10515 / FGSC 9487) (Filobasidiella neoformans var. grubii).